Here is a 132-residue protein sequence, read N- to C-terminus: Small ribosomal subunit protein uS8 (132 aa).

The protein belongs to the universal ribosomal protein uS8 family. In terms of assembly, part of the 30S ribosomal subunit. Contacts proteins S5 and S12.

In terms of biological role, one of the primary rRNA binding proteins, it binds directly to 16S rRNA central domain where it helps coordinate assembly of the platform of the 30S subunit. The sequence is that of Small ribosomal subunit protein uS8 from Allorhizobium ampelinum (strain ATCC BAA-846 / DSM 112012 / S4) (Agrobacterium vitis (strain S4)).